The primary structure comprises 572 residues: Isocitrate lyase (572 aa).

104–106 lines the substrate pocket; the sequence is SGW. Position 175 (D175) interacts with Mg(2+). The Proton acceptor role is filled by C213. Substrate-binding positions include 214–215, R250, 437–441, and T472; these read GH and NLSPS. The disordered stretch occupies residues 550–572; that stretch reads QFKGSWTGPGSESSSHVLAKSRM. The Microbody targeting signal motif lies at 570-572; sequence SRM.

It belongs to the isocitrate lyase/PEP mutase superfamily. Isocitrate lyase family. Mg(2+) is required as a cofactor. As to expression, expressed in leaves.

It localises to the glyoxysome. It carries out the reaction D-threo-isocitrate = glyoxylate + succinate. Its pathway is carbohydrate metabolism; glyoxylate cycle; (S)-malate from isocitrate: step 1/2. Its function is as follows. Involved in storage lipid mobilization during the growth of higher plant seedling. This Oryza sativa subsp. japonica (Rice) protein is Isocitrate lyase.